Consider the following 1013-residue polypeptide: Endosome/lysosome-associated apoptosis and autophagy regulator 1 (1013 aa).

A signal peptide spans 1–41 (MAEPGHSHHLSARVRGRTERRIPRLWRLLLWAGTAFQVTQG). At 42–910 (TGPELHACKE…ICKTIDFWLK (869 aa)) the chain is on the extracellular side. Residue asparagine 153 is glycosylated (N-linked (GlcNAc...) asparagine). 3 disulfide bridges follow: cysteine 278-cysteine 295, cysteine 308-cysteine 330, and cysteine 311-cysteine 342. 2 N-linked (GlcNAc...) asparagine glycosylation sites follow: asparagine 404 and asparagine 672. An MRH domain is found at 656 to 858 (NDCTFSRNTP…LWESAAACPL (203 aa)). Intrachain disulfides connect cysteine 658-cysteine 704, cysteine 714-cysteine 739, cysteine 808-cysteine 844, and cysteine 820-cysteine 856. A helical membrane pass occupies residues 911–931 (VGISAGTCTAILLTVLTCYFW). At 932–1013 (KKNQKLEYKY…TSSGGLDMDL (82 aa)) the chain is on the cytoplasmic side.

Belongs to the ELAPOR family. Interacts with HSPA5; may regulate the function of HSPA5 in apoptosis and cell proliferation. In terms of tissue distribution, expressed in normal endometrium but overexpressed in endometroid tumors.

It is found in the cell membrane. It localises to the late endosome membrane. The protein localises to the golgi apparatus. Its subcellular location is the trans-Golgi network membrane. The protein resides in the lysosome membrane. It is found in the endoplasmic reticulum membrane. May protect cells from cell death by inducing cytosolic vacuolization and up-regulating the autophagy pathway. May play a role in apoptosis and cell proliferation through its interaction with HSPA5. The polypeptide is Endosome/lysosome-associated apoptosis and autophagy regulator 1 (Homo sapiens (Human)).